The primary structure comprises 472 residues: Divalent metal cation transporter MntH (472 aa).

The next 11 helical transmembrane spans lie at 59–79, 92–112, 136–156, 167–187, 196–216, 233–253, 288–308, 325–345, 377–397, 402–422, and 439–459; these read LLAFLGPGYMVSVGYMDPGNW, MLLSVILLSNVMAIVLQALAA, LALWVVCELAIIACDLAEVIG, VPIIWGVVITAVDVVLVLLLM, AFVIALLLVIFGCFVVQIVLA, VVADPQALYLAIGIVGATVMP, LALMLALFINASILILAAAVF, LLAPVLGVGVAATLFATALLA, VLTRGLAIVPVIVVVALYGEQ, LLLLSQVILSMQLPFAVIPLL, and WLMVVAWLIAGVIVVLNVKLL.

The protein belongs to the NRAMP family.

It is found in the cell inner membrane. Its function is as follows. H(+)-stimulated, divalent metal cation uptake system. In Xylella fastidiosa (strain 9a5c), this protein is Divalent metal cation transporter MntH.